Reading from the N-terminus, the 106-residue chain is Flagellar transcriptional regulator FlhD (106 aa).

It belongs to the FlhD family. In terms of assembly, homodimer; disulfide-linked. Forms a heterohexamer composed of two FlhC and four FlhD subunits. Each FlhC binds a FlhD dimer, forming a heterotrimer, and a hexamer assembles by dimerization of two heterotrimers.

It localises to the cytoplasm. Functionally, functions in complex with FlhC as a master transcriptional regulator that regulates transcription of several flagellar and non-flagellar operons by binding to their promoter region. Activates expression of class 2 flagellar genes, including fliA, which is a flagellum-specific sigma factor that turns on the class 3 genes. Also regulates genes whose products function in a variety of physiological pathways. The polypeptide is Flagellar transcriptional regulator FlhD (Burkholderia mallei (strain SAVP1)).